We begin with the raw amino-acid sequence, 134 residues long: NADH-quinone oxidoreductase subunit A (134 aa).

Helical transmembrane passes span 12 to 32, 64 to 84, and 93 to 113; these read FAIYVIAAICLCLVMIGLAAL, FYLVAMFFVIFDVEALYLFAW, and WVGFIEAAIFIGLLLVGLLYL.

The protein belongs to the complex I subunit 3 family. In terms of assembly, NDH-1 is composed of 14 different subunits. Subunits NuoA, H, J, K, L, M, N constitute the membrane sector of the complex.

It localises to the cell inner membrane. The catalysed reaction is a quinone + NADH + 5 H(+)(in) = a quinol + NAD(+) + 4 H(+)(out). Its function is as follows. NDH-1 shuttles electrons from NADH, via FMN and iron-sulfur (Fe-S) centers, to quinones in the respiratory chain. The immediate electron acceptor for the enzyme in this species is believed to be ubiquinone. Couples the redox reaction to proton translocation (for every two electrons transferred, four hydrogen ions are translocated across the cytoplasmic membrane), and thus conserves the redox energy in a proton gradient. This chain is NADH-quinone oxidoreductase subunit A, found in Aeromonas salmonicida (strain A449).